Consider the following 197-residue polypeptide: Molybdenum cofactor guanylyltransferase (197 aa).

Residues 10–12 (LAG), Lys-23, Asn-51, Asp-69, and Asp-99 each bind GTP. Asp-99 is a binding site for Mg(2+).

Belongs to the MobA family. As to quaternary structure, monomer. Mg(2+) is required as a cofactor.

It is found in the cytoplasm. It carries out the reaction Mo-molybdopterin + GTP + H(+) = Mo-molybdopterin guanine dinucleotide + diphosphate. Functionally, transfers a GMP moiety from GTP to Mo-molybdopterin (Mo-MPT) cofactor (Moco or molybdenum cofactor) to form Mo-molybdopterin guanine dinucleotide (Mo-MGD) cofactor. The sequence is that of Molybdenum cofactor guanylyltransferase from Shewanella sp. (strain MR-4).